Reading from the N-terminus, the 1356-residue chain is DNA-directed RNA polymerase subunit beta (1356 aa).

The protein belongs to the RNA polymerase beta chain family. As to quaternary structure, the RNAP catalytic core consists of 2 alpha, 1 beta, 1 beta' and 1 omega subunit. When a sigma factor is associated with the core the holoenzyme is formed, which can initiate transcription.

The catalysed reaction is RNA(n) + a ribonucleoside 5'-triphosphate = RNA(n+1) + diphosphate. Functionally, DNA-dependent RNA polymerase catalyzes the transcription of DNA into RNA using the four ribonucleoside triphosphates as substrates. In Caulobacter vibrioides (strain ATCC 19089 / CIP 103742 / CB 15) (Caulobacter crescentus), this protein is DNA-directed RNA polymerase subunit beta.